A 270-amino-acid polypeptide reads, in one-letter code: MISKINFVKMHGLGNDFVIVNKRDLLSSYDLSQLAKNMADRHTGIGCDQFIIYEEHNDFYEMIIYNIDGSSAKLCGNATRCLAKLIYLDTGKKDITVMVCNKKLLCNVEDENNISVNVGSVSFNEAWMPSRDKIWELAERYMIDLKETICVDIGNPHLVIFSKLEPQDQKIVGEKLQAKELFADGVNVNFAEVKDNKIYLSVWERGVGFTLACGSGACGSFAAGLKLGFIHAPSMVVFKHGILTMKEENGNIIMQGSAKLVAQGEYYYEQ.

Substrate is bound by residues Asn-15, Gln-49, and Asn-66. The active-site Proton donor is Cys-75. Residues 76–77, Asn-155, Asn-187, and 204–205 contribute to the substrate site; these read GN and ER. Residue Cys-213 is the Proton acceptor of the active site. Position 214-215 (214-215) interacts with substrate; sequence GS.

Belongs to the diaminopimelate epimerase family. In terms of assembly, homodimer.

It is found in the cytoplasm. The enzyme catalyses (2S,6S)-2,6-diaminopimelate = meso-2,6-diaminopimelate. The protein operates within amino-acid biosynthesis; L-lysine biosynthesis via DAP pathway; DL-2,6-diaminopimelate from LL-2,6-diaminopimelate: step 1/1. Catalyzes the stereoinversion of LL-2,6-diaminopimelate (L,L-DAP) to meso-diaminopimelate (meso-DAP), a precursor of L-lysine and an essential component of the bacterial peptidoglycan. The sequence is that of Diaminopimelate epimerase from Rickettsia akari (strain Hartford).